Here is a 321-residue protein sequence, read N- to C-terminus: Probable cell division protein WhiA (321 aa).

Residues 275–308 (SLDELGRLADPPMTKDAVAGRIRRLLAMADKRAA) constitute a DNA-binding region (H-T-H motif).

It belongs to the WhiA family.

Involved in cell division and chromosome segregation. This is Probable cell division protein WhiA from Micrococcus luteus (strain ATCC 4698 / DSM 20030 / JCM 1464 / CCM 169 / CCUG 5858 / IAM 1056 / NBRC 3333 / NCIMB 9278 / NCTC 2665 / VKM Ac-2230) (Micrococcus lysodeikticus).